Reading from the N-terminus, the 489-residue chain is Mitochondrial distribution and morphology protein 10 (489 aa).

Belongs to the MDM10 family. In terms of assembly, component of the ER-mitochondria encounter structure (ERMES) or MDM complex, composed of MMM1, MDM10, MDM12 and MDM34. Associates with the mitochondrial outer membrane sorting assembly machinery SAM(core) complex.

It localises to the mitochondrion outer membrane. Functionally, component of the ERMES/MDM complex, which serves as a molecular tether to connect the endoplasmic reticulum and mitochondria. Components of this complex are involved in the control of mitochondrial shape and protein biogenesis and may function in phospholipid exchange. MDM10 is involved in the late assembly steps of the general translocase of the mitochondrial outer membrane (TOM complex). Functions in the TOM40-specific route of the assembly of outer membrane beta-barrel proteins, including the association of TOM40 with the receptor TOM22 and small TOM proteins. Can associate with the SAM(core) complex as well as the MDM12-MMM1 complex, both involved in late steps of the major beta-barrel assembly pathway, that is responsible for biogenesis of all outer membrane beta-barrel proteins. May act as a switch that shuttles between both complexes and channels precursor proteins into the TOM40-specific pathway. Plays a role in mitochondrial morphology and in the inheritance of mitochondria. The polypeptide is Mitochondrial distribution and morphology protein 10 (Arthroderma otae (strain ATCC MYA-4605 / CBS 113480) (Microsporum canis)).